The primary structure comprises 595 residues: Solute carrier family 13 member 1 (595 aa).

Helical transmembrane passes span 13 to 33 (FLFV…LHTK), 41 to 61 (LFVV…TALL), 77 to 97 (VASA…CLAT), 108 to 128 (IALK…LGFM), and 131 to 151 (TAFL…MPIA). 2 N-linked (GlcNAc...) asparagine glycosylation sites follow: Asn-174 and Asn-207. Transmembrane regions (helical) follow at residues 239–259 (LTCL…ITGT), 290–310 (PAAL…FLGF), 348–368 (IVTL…DPGF), 381–401 (GFAT…LIPA), 464–484 (PLGS…VTSL), 491–511 (PATI…IHVN), 512–532 (PLYI…LPVA), and 554–574 (GLGV…TWIV). A glycan (N-linked (GlcNAc...) asparagine) is linked at Asn-591.

Belongs to the SLC13A/DASS transporter (TC 2.A.47) family. NADC subfamily. In terms of tissue distribution, highly expressed in kidney; not detectable in the other tissues tested.

It is found in the apical cell membrane. It catalyses the reaction sulfate(out) + 3 Na(+)(out) = sulfate(in) + 3 Na(+)(in). It carries out the reaction selenate(out) + 3 Na(+)(out) = selenate(in) + 3 Na(+)(in). The enzyme catalyses thiosulfate(out) + 3 Na(+)(out) = thiosulfate(in) + 3 Na(+)(in). Inhibited by thiosulfate, selenate, molybdate, tungstate, citrate and succinate. Functionally, sodium:sulfate symporter that mediates sulfate reabsorption in the kidney and small intestine. Can also mediate the transport of selenate and thiosulfate. The polypeptide is Solute carrier family 13 member 1 (SLC13A1) (Homo sapiens (Human)).